We begin with the raw amino-acid sequence, 386 residues long: Succinate--CoA ligase [ADP-forming] subunit beta (386 aa).

Residues 9-235 (KELFAKHDVP…REEEDPLESA (227 aa)) form the ATP-grasp domain. Residues Lys-44, 51-53 (GRG), Ala-93, and Glu-98 each bind ATP. 2 residues coordinate Mg(2+): Asn-190 and Asp-204. Residues Asn-255 and 317 to 319 (GIT) each bind substrate.

The protein belongs to the succinate/malate CoA ligase beta subunit family. As to quaternary structure, heterotetramer of two alpha and two beta subunits. It depends on Mg(2+) as a cofactor.

The enzyme catalyses succinate + ATP + CoA = succinyl-CoA + ADP + phosphate. The catalysed reaction is GTP + succinate + CoA = succinyl-CoA + GDP + phosphate. It functions in the pathway carbohydrate metabolism; tricarboxylic acid cycle; succinate from succinyl-CoA (ligase route): step 1/1. Functionally, succinyl-CoA synthetase functions in the citric acid cycle (TCA), coupling the hydrolysis of succinyl-CoA to the synthesis of either ATP or GTP and thus represents the only step of substrate-level phosphorylation in the TCA. The beta subunit provides nucleotide specificity of the enzyme and binds the substrate succinate, while the binding sites for coenzyme A and phosphate are found in the alpha subunit. In Nocardioides sp. (strain ATCC BAA-499 / JS614), this protein is Succinate--CoA ligase [ADP-forming] subunit beta.